A 188-amino-acid polypeptide reads, in one-letter code: Phosphoribosylglycinamide formyltransferase (188 aa).

A N(1)-(5-phospho-beta-D-ribosyl)glycinamide-binding site is contributed by 12-14 (GSN). Residues lysine 66, 91-94 (MRLV), and asparagine 108 each bind (6R)-10-formyltetrahydrofolate. Histidine 110 serves as the catalytic Proton donor.

The protein belongs to the GART family.

It catalyses the reaction N(1)-(5-phospho-beta-D-ribosyl)glycinamide + (6R)-10-formyltetrahydrofolate = N(2)-formyl-N(1)-(5-phospho-beta-D-ribosyl)glycinamide + (6S)-5,6,7,8-tetrahydrofolate + H(+). The protein operates within purine metabolism; IMP biosynthesis via de novo pathway; N(2)-formyl-N(1)-(5-phospho-D-ribosyl)glycinamide from N(1)-(5-phospho-D-ribosyl)glycinamide (10-formyl THF route): step 1/1. Catalyzes the transfer of a formyl group from 10-formyltetrahydrofolate to 5-phospho-ribosyl-glycinamide (GAR), producing 5-phospho-ribosyl-N-formylglycinamide (FGAR) and tetrahydrofolate. The polypeptide is Phosphoribosylglycinamide formyltransferase (Staphylococcus epidermidis (strain ATCC 35984 / DSM 28319 / BCRC 17069 / CCUG 31568 / BM 3577 / RP62A)).